The following is a 130-amino-acid chain: Small ribosomal subunit protein uS9 (130 aa).

This sequence belongs to the universal ribosomal protein uS9 family.

The chain is Small ribosomal subunit protein uS9 from Aliivibrio salmonicida (strain LFI1238) (Vibrio salmonicida (strain LFI1238)).